Reading from the N-terminus, the 135-residue chain is Large ribosomal subunit protein uL22 (135 aa).

This sequence belongs to the universal ribosomal protein uL22 family. Part of the 50S ribosomal subunit.

Its function is as follows. This protein binds specifically to 23S rRNA; its binding is stimulated by other ribosomal proteins, e.g. L4, L17, and L20. It is important during the early stages of 50S assembly. It makes multiple contacts with different domains of the 23S rRNA in the assembled 50S subunit and ribosome. The globular domain of the protein is located near the polypeptide exit tunnel on the outside of the subunit, while an extended beta-hairpin is found that lines the wall of the exit tunnel in the center of the 70S ribosome. The chain is Large ribosomal subunit protein uL22 from Christiangramia forsetii (strain DSM 17595 / CGMCC 1.15422 / KT0803) (Gramella forsetii).